The chain runs to 476 residues: MGRTLAEKVWDDHVVRRAEGEPDLLFIDLHLLHEVTSPQAFDGLRKSGRPVRRLDLTIATEDHNTPTLDIDKPIADPVSRAQLETLRKNCADFGVRLHPLGDVEQGVVHVVGPQLGLTQPGTTVVCGDSHTSTHGAFGALAFGIGTSQVEHVLATQTLPLARPKTMAITVDGELPEGVTAKDLILAIIARIGTGGGQGYILEYRGEAIEKLSMEARMTICNMSIEAGARAGMIAPDETTFAYLQGRPHAPEGADWDAAVEYWKTLRTDDDAEFDAEVVIEAAELAPFVTWGTNPGQGAPLSAAVPDPASYEDASERFAAEKALEYMGLEAGQPLRSIQVDTVFVGSCTNGRIEDLRAAAEIVRDRKVADGVRMLVVPGSARVGLQAVSEGLDVVFKEAGAEWRHAGCSMCLGMNPDQLAPGERSASTSNRNFEGRQGKGGRTHLVSPQVAAATAVLGHLASPADLSAADVPTPAGV.

3 residues coordinate [4Fe-4S] cluster: Cys347, Cys407, and Cys410. Positions 418–442 are disordered; the sequence is LAPGERSASTSNRNFEGRQGKGGRT.

Belongs to the aconitase/IPM isomerase family. LeuC type 1 subfamily. Heterodimer of LeuC and LeuD. The cofactor is [4Fe-4S] cluster.

It carries out the reaction (2R,3S)-3-isopropylmalate = (2S)-2-isopropylmalate. Its pathway is amino-acid biosynthesis; L-leucine biosynthesis; L-leucine from 3-methyl-2-oxobutanoate: step 2/4. Catalyzes the isomerization between 2-isopropylmalate and 3-isopropylmalate, via the formation of 2-isopropylmaleate. The chain is 3-isopropylmalate dehydratase large subunit from Streptomyces coelicolor (strain ATCC BAA-471 / A3(2) / M145).